Consider the following 132-residue polypeptide: Transcription antitermination protein NusB (132 aa).

The protein belongs to the NusB family.

Functionally, involved in transcription antitermination. Required for transcription of ribosomal RNA (rRNA) genes. Binds specifically to the boxA antiterminator sequence of the ribosomal RNA (rrn) operons. The polypeptide is Transcription antitermination protein NusB (Campylobacter jejuni subsp. jejuni serotype O:2 (strain ATCC 700819 / NCTC 11168)).